A 257-amino-acid polypeptide reads, in one-letter code: Pyridoxine/pyridoxamine 5'-phosphate oxidase (257 aa).

Position 33 to 36 (33 to 36) interacts with substrate; that stretch reads RIKY. 90–93 contacts FMN; it reads RFVL. Lys-95 provides a ligand contact to pyridoxal 5'-phosphate. Residues 105 to 106 and Lys-112 each bind FMN; that span reads YT. Pyridoxal 5'-phosphate contacts are provided by Tyr-152, Arg-156, and Ser-160. FMN-binding positions include 169–170 and Trp-216; that span reads QS. Substrate is bound at residue 222 to 224; that stretch reads RLH. Arg-226 is an FMN binding site.

It belongs to the pyridoxamine 5'-phosphate oxidase family. Homodimer. FMN serves as cofactor. In terms of tissue distribution, expressed in silk gland and fat body of the larva.

It carries out the reaction pyridoxamine 5'-phosphate + O2 + H2O = pyridoxal 5'-phosphate + H2O2 + NH4(+). It catalyses the reaction pyridoxine 5'-phosphate + O2 = pyridoxal 5'-phosphate + H2O2. Its pathway is cofactor metabolism; pyridoxal 5'-phosphate salvage; pyridoxal 5'-phosphate from pyridoxamine 5'-phosphate: step 1/1. It participates in cofactor metabolism; pyridoxal 5'-phosphate salvage; pyridoxal 5'-phosphate from pyridoxine 5'-phosphate: step 1/1. Its function is as follows. Catalyzes the oxidation of either pyridoxine 5'-phosphate (PNP) or pyridoxamine 5'-phosphate (PMP) into pyridoxal 5'-phosphate (PLP). In Bombyx mori (Silk moth), this protein is Pyridoxine/pyridoxamine 5'-phosphate oxidase.